Consider the following 440-residue polypeptide: R3H and coiled-coil domain-containing protein 1 (440 aa).

The region spanning 16–81 (NDFVHRIQEE…KRRTVICHQD (66 aa)) is the R3H domain. The segment at 154–225 (TSVLKREAPA…LGPESQSGKG (72 aa)) is disordered. Over residues 157–168 (LKREAPAGRDPE) the composition is skewed to basic and acidic residues. Residue S236 is modified to Phosphoserine. Residues 242 to 300 (LEKGKESLLEKRLVAEEEEDEEEVEEDGPSSCSEDDYSELLQEITDNLTKKEIQIEKIH) adopt a coiled-coil conformation. Residues 254–276 (LVAEEEEDEEEVEEDGPSSCSED) are disordered. Positions 257 to 276 (EEEEDEEEVEEDGPSSCSED) are enriched in acidic residues.

This chain is R3H and coiled-coil domain-containing protein 1, found in Homo sapiens (Human).